The following is a 117-amino-acid chain: Large ribosomal subunit protein bL20 (117 aa).

It belongs to the bacterial ribosomal protein bL20 family.

Its function is as follows. Binds directly to 23S ribosomal RNA and is necessary for the in vitro assembly process of the 50S ribosomal subunit. It is not involved in the protein synthesizing functions of that subunit. This Maridesulfovibrio salexigens (strain ATCC 14822 / DSM 2638 / NCIMB 8403 / VKM B-1763) (Desulfovibrio salexigens) protein is Large ribosomal subunit protein bL20.